The primary structure comprises 245 residues: MYPVDLHMHTVASTHAYSTLHDYIAEAKRKGIKLFAITDHGPDMADAPHYWHFVNMRIWPRLVDGVGILRGIESNIKNIEGEIDCSGPMLTSLDLIIAGFHEPVFPPQDRDTHTQAMIAAMASGKVHMISHPGNPKFPVDIPAIAEAAARYQVALEINNSSFVSSRMGSEDNCRAIAAAVRDAGGWVALGSDSHTAFTLGEFTECRKILDAVDFPEERILNVSPRRLLNFLESRGMPAIPEFADL.

Positions 7, 9, 15, 40, 73, 101, 131, 192, and 194 each coordinate Zn(2+).

This sequence belongs to the PHP family. In terms of assembly, homotrimer. The cofactor is Zn(2+).

This Klebsiella pneumoniae subsp. pneumoniae (strain ATCC 700721 / MGH 78578) protein is Probable phosphatase KPN78578_10290.